A 148-amino-acid chain; its full sequence is Large ribosomal subunit protein bL9 (148 aa).

The protein belongs to the bacterial ribosomal protein bL9 family.

Binds to the 23S rRNA. In Frankia alni (strain DSM 45986 / CECT 9034 / ACN14a), this protein is Large ribosomal subunit protein bL9.